Consider the following 301-residue polypeptide: Probable alpha-L-glutamate ligase (301 aa).

Residues 104–287 (MQLLSRRGIG…IAGMIVEFIE (184 aa)) enclose the ATP-grasp domain. Residues K141, 178–179 (EY), D187, and 211–213 (RSN) each bind ATP. Residues D248, E260, and N262 each contribute to the Mg(2+) site. 3 residues coordinate Mn(2+): D248, E260, and N262.

The protein belongs to the RimK family. It depends on Mg(2+) as a cofactor. Requires Mn(2+) as cofactor.

The sequence is that of Probable alpha-L-glutamate ligase from Vibrio cholerae serotype O1 (strain ATCC 39541 / Classical Ogawa 395 / O395).